Reading from the N-terminus, the 315-residue chain is Protein phosphatase PTC7 homolog fig (315 aa).

A PPM-type phosphatase domain is found at 54-309; sequence KHSIASAKDN…DDITVILATV (256 aa). Positions 86, 87, and 231 each coordinate Mn(2+).

Belongs to the PP2C family. The cofactor is Mg(2+). Mn(2+) is required as a cofactor.

The catalysed reaction is O-phospho-L-seryl-[protein] + H2O = L-seryl-[protein] + phosphate. It catalyses the reaction O-phospho-L-threonyl-[protein] + H2O = L-threonyl-[protein] + phosphate. This chain is Protein phosphatase PTC7 homolog fig, found in Drosophila willistoni (Fruit fly).